Here is an 86-residue protein sequence, read N- to C-terminus: UPF0147 protein PYRAB16980 (86 aa).

This sequence belongs to the UPF0147 family.

The protein is UPF0147 protein PYRAB16980 of Pyrococcus abyssi (strain GE5 / Orsay).